The chain runs to 399 residues: Keratin, type I cytoskeletal 19 (399 aa).

Residues 1 to 78 (MTSYSYRQSS…ATSDGLLAGN (78 aa)) form a head region. Arginine 7 is modified (omega-N-methylarginine). Phosphoserine is present on residues serine 14 and serine 22. The residue at position 24 (arginine 24) is an Asymmetric dimethylarginine; alternate. An Omega-N-methylarginine; alternate modification is found at arginine 24. At arginine 32 the chain carries Omega-N-methylarginine. Phosphoserine occurs at positions 35 and 40. Omega-N-methylarginine occurs at positions 43 and 51. 2 positions are modified to phosphoserine: serine 57 and serine 71. Residues 79 to 114 (EKLTMQNLNDRLASYLEKVRALEEANGDLEVKIRDW) form a coil 1A region. The region spanning 79–390 (EKLTMQNLND…NLLEGQDAYF (312 aa)) is the IF rod domain. The linker 1 stretch occupies residues 115–132 (YQKQGPGPARDYSHYFKT). The coil 1B stretch occupies residues 133–224 (IEDLRDQILG…KNHEEEMSVL (92 aa)). The interval 225–247 (KGQVGGQVSVEVDSAPGIDLAKI) is linker 12. Positions 243–389 (DLAKILSDMR…RNLLEGQDAY (147 aa)) are necessary for interaction with PNN. The coil 2 stretch occupies residues 248–386 (LSDMRSQYEV…ATYRNLLEGQ (139 aa)). Threonine 322 is modified (phosphothreonine). The rod-like helical tail stretch occupies residues 387-399 (DAYFNDLSLAKAL). Phosphoserine is present on serine 394.

The protein belongs to the intermediate filament family. Heterotetramer of two type I and two type II keratins. Interacts with PNN and the actin-binding domain of DMD.

Its function is as follows. Involved in the organization of myofibers. Together with KRT8, helps to link the contractile apparatus to dystrophin at the costameres of striated muscle. This chain is Keratin, type I cytoskeletal 19 (KRT19), found in Bos taurus (Bovine).